The sequence spans 180 residues: ATP-dependent protease subunit HslV (180 aa).

Thr5 is a catalytic residue. Na(+) contacts are provided by Gly161, Cys164, and Thr167.

This sequence belongs to the peptidase T1B family. HslV subfamily. As to quaternary structure, a double ring-shaped homohexamer of HslV is capped on each side by a ring-shaped HslU homohexamer. The assembly of the HslU/HslV complex is dependent on binding of ATP.

The protein localises to the cytoplasm. The enzyme catalyses ATP-dependent cleavage of peptide bonds with broad specificity.. Allosterically activated by HslU binding. In terms of biological role, protease subunit of a proteasome-like degradation complex believed to be a general protein degrading machinery. The sequence is that of ATP-dependent protease subunit HslV from Campylobacter curvus (strain 525.92).